The following is a 387-amino-acid chain: Prostatic acid phosphatase (387 aa).

A signal peptide spans 1-34; the sequence is MRNAALLMTRATSLRLSLLLLLSFLPDLDGGVRA. Residue arginine 45 participates in substrate binding. Histidine 46 (nucleophile) is an active-site residue. Arginine 49 contacts substrate. N-linked (GlcNAc...) asparagine glycosylation is present at asparagine 96. A substrate-binding site is contributed by arginine 113. Cystine bridges form between cysteine 163–cysteine 374, cysteine 217–cysteine 315, and cysteine 349–cysteine 353. Residue asparagine 222 is glycosylated (N-linked (GlcNAc...) asparagine). Histidine 291 contacts substrate. Aspartate 292 acts as the Proton donor in catalysis. Residue asparagine 335 is glycosylated (N-linked (GlcNAc...) asparagine).

The protein belongs to the histidine acid phosphatase family. In terms of assembly, homodimer; dimer formation is required for phosphatase activity.

Its subcellular location is the secreted. It carries out the reaction a phosphate monoester + H2O = an alcohol + phosphate. The enzyme catalyses 1-(9Z-octadecenoyl)-sn-glycero-3-phosphate + H2O = 1-(9Z-octadecenoyl)-sn-glycerol + phosphate. The catalysed reaction is O-phospho-L-tyrosyl-[protein] + H2O = L-tyrosyl-[protein] + phosphate. Functionally, a non-specific tyrosine phosphatase that dephosphorylates a diverse number of substrates under acidic conditions (pH 4-6) including alkyl, aryl, and acyl orthophosphate monoesters and phosphorylated proteins. Has lipid phosphatase activity and inactivates lysophosphatidic acid in seminal plasma. In Bos taurus (Bovine), this protein is Prostatic acid phosphatase (ACP3).